Here is a 554-residue protein sequence, read N- to C-terminus: Protein NODULATION SIGNALING PATHWAY 1 (554 aa).

Positions 76 to 165 (TTSTTSLEPN…NSNNGNNKDG (90 aa)) are disordered. The segment covering 82-91 (LEPNSFNNIP) has biased composition (polar residues). Basic and acidic residues predominate over residues 95–107 (LPKKRNAEDELSL). A compositionally biased stretch (low complexity) spans 150–162 (AKANGSNSNNGNN). The GRAS domain maps to 159 to 548 (NGNNKDGRWA…QPVSFCSLWK (390 aa)). The leucine repeat I (LRI) stretch occupies residues 166-227 (RWAEQLLNPC…HHLSSSSSST (62 aa)). The VHIID stretch occupies residues 246–315 (LLKFYEFSPW…GGPPPLVRLT (70 aa)). Positions 281–285 (LHILD) match the VHIID motif. Residues 331–373 (TPFSIGPCGDTFSSGLLGYAQSLNVNLQIKKLDNHPLQTLNAK) are leucine repeat II (LRII). Residues 383–468 (LIVCAQFRLH…RDSDERKMME (86 aa)) are PFYRE. The tract at residues 471–548 (AAKALTNQRE…QPVSFCSLWK (78 aa)) is SAW.

The protein belongs to the GRAS family. In terms of tissue distribution, expressed in epidermal and cortical root cells.

The protein resides in the nucleus. Transcriptional regulator essential for Nod-factor-induced gene expression. Acts downstream of calcium spiking. May be a target of DMI3, a calcium/calmodulin-dependent protein kinase (CCaMK). Is essential for Nod factor-elicited expression of ERN1. Transcription factor involved in the control of strigolactone biosynthesis in roots through the activation of the beta-carotene isomerase D27, which participates in a pathway leading to biosynthesis of strigolactones. The polypeptide is Protein NODULATION SIGNALING PATHWAY 1 (Medicago truncatula (Barrel medic)).